The sequence spans 148 residues: Large ribosomal subunit protein bL9 (148 aa).

It belongs to the bacterial ribosomal protein bL9 family.

Its function is as follows. Binds to the 23S rRNA. This Streptomyces avermitilis (strain ATCC 31267 / DSM 46492 / JCM 5070 / NBRC 14893 / NCIMB 12804 / NRRL 8165 / MA-4680) protein is Large ribosomal subunit protein bL9.